The following is a 650-amino-acid chain: MADNLPSDFDVIVIGTGLPESIIAAACSRSGQRVLHVDSRSYYGGNWASFSFSGLLSWLKEYQENNDVVTENSMWQEQILENEEAIPLSSKDKTIQHVEVFCYASQDLHKDVEEAGALQKNHASVTSAQSAEAAEAAETSCLPTAVEPLSMGSCEIPAEQSQCPGPESSPEVNDAEATGKKENSDAKSSTEEPSENVPKVQDNTETPKKNRITYSQIIKEGRRFNIDLVSQLLYSRGLLIDLLIKSNVSRYAEFKNITRILAFREGTVEQVPCSRADVFNSKQLTMVEKRMLMKFLTFCVEYEEHPDEYRAYEGTTFSEYLKTQKLTPNLQYFVLHSIAMTSETTSCTVDGLKATKKFLQCLGRYGNTPFLFPLYGQGELPQCFCRMCAVFGGIYCLRHSVQCLVVDKESRKCKAVIDQFGQRIISKHFIIEDSYLSENTCSRVQYRQISRAVLITDGSVLKTDADQQVSILAVPAEEPGSFGVRVIELCSSTMTCMKGTYLVHLTCMSSKTAREDLERVVQKLFTPYTEIEAENEQVEKPRLLWALYFNMRDSSDISRDCYNDLPSNVYVCSGPDSGLGNDNAVKQAETLFQQICPNEDFCPAPPNPEDIVLDGDSSQQEVPESSVTPETNSETPKESTVLGNPEEPSE.

Disordered stretches follow at residues 156–208 and 603–650; these read IPAE…ETPK and PAPP…EPSE. Positions 177 to 190 are enriched in basic and acidic residues; the sequence is ATGKKENSDAKSST. Over residues 616–634 the composition is skewed to polar residues; sequence DSSQQEVPESSVTPETNSE.

The protein belongs to the Rab GDI family. Monomer. Heterotrimer composed of RABGGTA, RABGGTB and CHM; within this trimer, RABGGTA and RABGGTB form the catalytic component B, while CHM (component A) mediates Rab protein binding. Can associate with the Rab GGTase dimer (RGGT or component B) prior to Rab protein binding; the association is stabilized by geranylgeranyl pyrophosphate (GGpp). The CHM:RGGT:Rab complex is destabilized by GGpp. Interacts with RAB1A, RAB1B, RAB7A and RAB27A and mediates their prenylation. Interacts with RAB5A. Interacts with the non-phosphorylated forms of RAB3A, RAB3B, RAB3C, RAB3D, RAB5B, RAB5C RAB8A, RAB8B, RAB10, RAB12, RAB35, and RAB43. In terms of tissue distribution, most abundant in the heart, brain, and spleen. Lower levels seen in the lung, liver, muscle and kidney. Extremely low levels seen in the testis.

It is found in the cytoplasm. The protein resides in the cytosol. In terms of biological role, substrate-binding subunit of the Rab geranylgeranyltransferase (GGTase) complex. Binds unprenylated Rab proteins and presents the substrate peptide to the catalytic component B composed of RABGGTA and RABGGTB, and remains bound to it after the geranylgeranyl transfer reaction. The component A is thought to be regenerated by transferring its prenylated Rab back to the donor membrane. Besides, a pre-formed complex consisting of CHM and the Rab GGTase dimer (RGGT or component B) can bind to and prenylate Rab proteins; this alternative pathway is proposed to be the predominant pathway for Rab protein geranylgeranylation. The polypeptide is Rab proteins geranylgeranyltransferase component A 1 (Chm) (Rattus norvegicus (Rat)).